A 180-amino-acid polypeptide reads, in one-letter code: Chromosome-anchoring protein RacA (180 aa).

The segment at residues 5-25 (TPFIAKKLGVSPKAVVRIAQQ) is a DNA-binding region (H-T-H motif). A coiled-coil region spans residues 90-150 (HDFEQLAAQL…KLEAGLKKEE (61 aa)).

The protein belongs to the RacA family.

The protein localises to the cytoplasm. In terms of biological role, required for the formation of axial filaments and for anchoring the origin regions at the cell poles in sporulating cells, thus ensuring proper chromosome segregation in the prespore. Binds in a dispersed manner throughout the chromosome but preferentially to sites clustered in the origin portion of the chromosome, causing condensation of the chromosome and its remodeling into an elongated, anchored structure. The polypeptide is Chromosome-anchoring protein RacA (Bacillus anthracis (strain A0248)).